The primary structure comprises 119 residues: Large ribosomal subunit protein uL18 (119 aa).

The protein belongs to the universal ribosomal protein uL18 family. Part of the 50S ribosomal subunit; part of the 5S rRNA/L5/L18/L25 subcomplex. Contacts the 5S and 23S rRNAs.

Functionally, this is one of the proteins that bind and probably mediate the attachment of the 5S RNA into the large ribosomal subunit, where it forms part of the central protuberance. This chain is Large ribosomal subunit protein uL18, found in Cupriavidus taiwanensis (strain DSM 17343 / BCRC 17206 / CCUG 44338 / CIP 107171 / LMG 19424 / R1) (Ralstonia taiwanensis (strain LMG 19424)).